An 84-amino-acid chain; its full sequence is U-actitoxin-Avd8e (84 aa).

Positions methionine 1–alanine 22 are cleaved as a signal peptide. A propeptide spanning residues aspartate 23 to glutamate 41 is cleaved from the precursor. Residues cysteine 44–cysteine 84 enclose the ShKT domain. Disulfide bonds link cysteine 44–cysteine 84, cysteine 53–cysteine 77, and cysteine 62–cysteine 81.

Belongs to the sea anemone 8 toxin family.

The protein resides in the secreted. Its subcellular location is the nematocyst. The protein is U-actitoxin-Avd8e of Anemonia viridis (Snakelocks anemone).